The following is a 1410-amino-acid chain: DNA-directed RNA polymerase subunit beta' (1410 aa).

Zn(2+) is bound by residues C70, C72, C85, and C88. Mg(2+) is bound by residues D460, D462, and D464. C814, C888, C895, and C898 together coordinate Zn(2+).

Belongs to the RNA polymerase beta' chain family. The RNAP catalytic core consists of 2 alpha, 1 beta, 1 beta' and 1 omega subunit. When a sigma factor is associated with the core the holoenzyme is formed, which can initiate transcription. It depends on Mg(2+) as a cofactor. Zn(2+) serves as cofactor.

It carries out the reaction RNA(n) + a ribonucleoside 5'-triphosphate = RNA(n+1) + diphosphate. In terms of biological role, DNA-dependent RNA polymerase catalyzes the transcription of DNA into RNA using the four ribonucleoside triphosphates as substrates. This is DNA-directed RNA polymerase subunit beta' from Saccharophagus degradans (strain 2-40 / ATCC 43961 / DSM 17024).